The following is a 1179-amino-acid chain: RecBCD enzyme subunit RecB (1179 aa).

The segment at 1-859 is DNA-binding and helicase activity, interacts with RecC; the sequence is MVYSDTKTSK…IIQNGKCMNY (859 aa). The 442-residue stretch at 18 to 459 folds into the UvrD-like helicase ATP-binding domain; that stretch reads NIMKKKLNIF…YYLDTNWRSS (442 aa). Residue 39-46 participates in ATP binding; that stretch reads ASAGTGKT. The region spanning 485–755 is the UvrD-like helicase C-terminal domain; the sequence is EPILSSSKNL…RIITIHKSKG (271 aa). A nuclease activity, interacts with RecD and RecA region spans residues 910 to 1179; that stretch reads YSQITSFTKI…KLTKLILQKK (270 aa). His-962, Asp-1073, and Asp-1086 together coordinate Mg(2+). The active-site For nuclease activity is Asp-1086.

The protein belongs to the helicase family. UvrD subfamily. As to quaternary structure, heterotrimer of RecB, RecC and RecD. All subunits contribute to DNA-binding. Interacts with RecA. It depends on Mg(2+) as a cofactor.

It carries out the reaction Exonucleolytic cleavage (in the presence of ATP) in either 5'- to 3'- or 3'- to 5'-direction to yield 5'-phosphooligonucleotides.. The catalysed reaction is Couples ATP hydrolysis with the unwinding of duplex DNA by translocating in the 3'-5' direction.. It catalyses the reaction ATP + H2O = ADP + phosphate + H(+). A helicase/nuclease that prepares dsDNA breaks (DSB) for recombinational DNA repair. Binds to DSBs and unwinds DNA via a highly rapid and processive ATP-dependent bidirectional helicase activity. Unwinds dsDNA until it encounters a Chi (crossover hotspot instigator) sequence from the 3' direction. Cuts ssDNA a few nucleotides 3' to the Chi site. The properties and activities of the enzyme are changed at Chi. The Chi-altered holoenzyme produces a long 3'-ssDNA overhang and facilitates RecA-binding to the ssDNA for homologous DNA recombination and repair. Holoenzyme degrades any linearized DNA that is unable to undergo homologous recombination. In the holoenzyme this subunit contributes ATPase, 3'-5' helicase, exonuclease activity and loads RecA onto ssDNA. This Buchnera aphidicola subsp. Schizaphis graminum (strain Sg) protein is RecBCD enzyme subunit RecB.